A 67-amino-acid chain; its full sequence is Small ribosomal subunit protein bS21 (67 aa).

Belongs to the bacterial ribosomal protein bS21 family.

The sequence is that of Small ribosomal subunit protein bS21 (rpsU) from Aquifex aeolicus (strain VF5).